The primary structure comprises 337 residues: MSLEQEEETQPGRLLGRRDAVPAFIEPNVRFWITERQSFIRRFLQWTELLDPTNVFISVESIENSRQLLCTNEDVSSPASADQRIQEAWKRSLATVHPDSSNLIPKLFRPAAFLPFMAPTVFLSMTPLKGIKSVILPQVFLCAYMAAFNSINGNRSYTCKPLERSLLMAGAVASSTFLGVIPQFVQMKYGLTGPWIKRLLPVIFLVQASGMNVYMSRSLESIKGIAVMDKEGNVLGHSRIAGTKAVRETLASRIVLFGTSALIPEVFTYFFKRTQYFRKNPGSLWILKLSCTVLAMGLMVPFSFSIFPQIGQIQYCSLEEKIQSPTEETEIFYHRGV.

Residue Ser-2 is modified to N-acetylserine. Transmembrane regions (helical) follow at residues 111–131 (AAFL…LKGI), 133–153 (SVIL…SING), and 165–185 (SLLM…PQFV). The residue at position 197 (Lys-197) is an N6-acetyllysine. 2 helical membrane-spanning segments follow: residues 251-271 (ASRI…TYFF) and 293-313 (VLAM…IGQI).

It belongs to the sideroflexin family.

It localises to the mitochondrion inner membrane. Mitochondrial amino-acid transporter. Does not act as a serine transporter: not able to mediate transport of serine into mitochondria. The protein is Sideroflexin-4 of Homo sapiens (Human).